A 283-amino-acid chain; its full sequence is Flagellar filament 35 kDa core protein (283 aa).

Belongs to the bacterial flagellin family. The flagellum consists of two outer layers around a core that contains several antigenically related polypeptides.

The protein localises to the periplasmic flagellum. It localises to the periplasm. Component of the core of the flagella. The chain is Flagellar filament 35 kDa core protein (flaB) from Leptospira interrogans serogroup Icterohaemorrhagiae serovar copenhageni (strain Fiocruz L1-130).